Consider the following 605-residue polypeptide: Conglutin beta 7 (605 aa).

The first 30 residues, 1–30, serve as a signal peptide directing secretion; that stretch reads MARMRVRFPTLVLLLGILFLMAVSIGIAYG. Positions 37-105 are enriched in basic and acidic residues; sequence NHERPGEREH…REPCREREQE (69 aa). 3 disordered regions span residues 37–193, 346–367, and 382–405; these read NHER…RFQT, LGNE…SYQD, and LRKH…NLRS. Residues 140-149 are compositionally biased toward low complexity; sequence QGSSSSSRKQ. Over residues 150–179 the composition is skewed to basic and acidic residues; that stretch reads SGYERRQYHERREQRDEKEKEQDSRSDSRR. The Cupin type-1 1 domain occupies 184–342; that stretch reads YHFSSERFQT…TFNTRYEEIQ (159 aa). Residues 401–563 form the Cupin type-1 2 domain; that stretch reads FNLRSNESIY…TFPGSAQDVE (163 aa). Residues N406 and N513 are each glycosylated (N-linked (GlcNAc...) asparagine). The tract at residues 574 to 593 is disordered; the sequence is FANAQPQQKQQREKEGRRGR.

The protein belongs to the 7S seed storage protein family. As to quaternary structure, component of globulins complexes which accumulate in seeds.

Functionally, seed storage protein. Accumulates during seed development and is hydrolyzed after germination to provide a carbon and nitrogen source for the developing seedling. The protein is Conglutin beta 7 of Lupinus angustifolius (Narrow-leaved blue lupine).